The chain runs to 122 residues: Small ribosomal subunit protein bS6 (122 aa).

The interval 95–122 (AETAPSPMMKEVQREEAKKAAAQSEQAA) is disordered.

Belongs to the bacterial ribosomal protein bS6 family.

Functionally, binds together with bS18 to 16S ribosomal RNA. The protein is Small ribosomal subunit protein bS6 of Ralstonia nicotianae (strain ATCC BAA-1114 / GMI1000) (Ralstonia solanacearum).